A 577-amino-acid chain; its full sequence is Jasmonoyl--L-amino acid synthetase JAR4 (577 aa).

S99 contributes to the ATP binding site. S102 is a binding site for jasmonate. Residues M119, T122, G163, N168, and 331–336 (GSSEGW) contribute to the ATP site. 166–170 (TTNVY) provides a ligand contact to an L-alpha-amino acid. Residue 328 to 331 (ADYG) participates in jasmonate binding. 531 to 535 (KILDH) contacts an L-alpha-amino acid.

It belongs to the IAA-amido conjugating enzyme family.

The catalysed reaction is a jasmonate + an L-alpha-amino acid + ATP = a jasmonyl-L-amino acid + AMP + diphosphate + H(+). Its function is as follows. Catalyzes the synthesis of jasmonate-amino acid conjugates by adenylation. Catalyzes the conjugation of jasmonate (JA) to Ile, Leu and Val. Catalyzes the conjugation of jasmonate (JA) to Ile to mediate defense signaling and resistance to the herbivore Manduca sexta caterpillars. In Nicotiana attenuata (Coyote tobacco), this protein is Jasmonoyl--L-amino acid synthetase JAR4.